We begin with the raw amino-acid sequence, 1094 residues long: Probable serine/threonine-protein kinase kinX (1094 aa).

The Protein kinase domain maps to 22-281 (LDFISEIGSG…QTLKQIKTTL (260 aa)). ATP is bound by residues 28–36 (IGSGGFGKV) and Lys-49. Asp-146 acts as the Proton acceptor in catalysis. Disordered regions lie at residues 301 to 884 (TTNG…SVED) and 946 to 1083 (IKVE…PNNK). A compositionally biased stretch (acidic residues) spans 330–344 (YDDDDDDDDDDDDND). Residues 351–373 (SDNSNSNVTLESNSNYNSSTING) are compositionally biased toward polar residues. The span at 374 to 387 (QEQQEQQEQQQQQQ) shows a compositional bias: low complexity. Acidic residues predominate over residues 393–408 (DEGEIEQDDDNIEVYD). The segment covering 410-424 (DYQKKLEEHQKELLE) has biased composition (basic and acidic residues). Composition is skewed to acidic residues over residues 433-454 (STDENEVYEQEEEEEEEDEEEQ), 480-496 (DDEDDDDDEEDEEEGDE), and 503-523 (DFDEDDEDDEEYDEDEDDEDE). Composition is skewed to low complexity over residues 526–542 (IQYYQQQLQYQQQLQKQ) and 564–585 (RQLQQQQQQQQQQQQQQQQHQQ). Residues 587–602 (YDDDDDDDDEEEEEYD) are compositionally biased toward acidic residues. Residues 603–639 (DVIRHDTDSEEESKDKTPLPWDQHFEKQKESENKVEQ) show a composition bias toward basic and acidic residues. A compositionally biased stretch (low complexity) spans 650 to 661 (QETEQQQQQQQQ). Positions 670 to 801 (PTKVEDVKVE…EPVEEVKVEE (132 aa)) are enriched in basic and acidic residues. The segment at 676 to 978 (VKVETEEQTK…PVKVEVASPV (303 aa)) is 40 X 9 AA approximate repeats of V-K-V-E-E-P-V-E-E. Residues 802 to 816 (PVEEVEAEESVQEPV) show a composition bias toward acidic residues. 2 stretches are compositionally biased toward basic and acidic residues: residues 817-884 (EEVK…SVED) and 946-971 (IKVEEPIKVEEPIKVEEPIKVEEPVK). Composition is skewed to low complexity over residues 972–985 (VEVASPVVQEQPPQ) and 992–1011 (VVSTSTITIASSPQQSSNSP). A compositionally biased stretch (polar residues) spans 1016–1031 (VKQPQQQEIEVNSTPI). The segment covering 1032–1050 (KQQQQQQQTPTQQTQTPTK) has biased composition (low complexity).

This sequence belongs to the protein kinase superfamily. TKL Ser/Thr protein kinase family.

The enzyme catalyses L-seryl-[protein] + ATP = O-phospho-L-seryl-[protein] + ADP + H(+). The catalysed reaction is L-threonyl-[protein] + ATP = O-phospho-L-threonyl-[protein] + ADP + H(+). This chain is Probable serine/threonine-protein kinase kinX (kinX), found in Dictyostelium discoideum (Social amoeba).